Consider the following 1253-residue polypeptide: Myosin-1 (1253 aa).

Positions 1 to 40 (MGHSRRPVGGEKKSRGFGRSKAAADVGDGRQAGKPQVKKA) are disordered. In terms of domain architecture, Myosin motor spans 50–729 (IGVSDLTLLS…TLFALEAMRD (680 aa)). 143-150 (GESGAGKT) serves as a coordination point for ATP. Serine 371 is modified (phosphoserine). Positions 418-500 (SIGILDIYGF…PGVFAALNDA (83 aa)) are actin-binding. IQ domains follow at residues 733 to 753 (HNMAIRIQRAWRNYLRYRIEC) and 754 to 779 (ATRIQRFWRRTTGGLEFIKLRDQGHQ). Positions 787 to 977 (RRRMSLLGSR…TIHTGAGEPA (191 aa)) constitute a TH1 domain. 2 disordered regions span residues 959-1083 (TGDD…PKKP) and 1139-1253 (QVAP…DDDW). Residues 1029–1055 (PQPAAAQPAAPQPAARVVPQPVAAVAA) are compositionally biased toward low complexity. Pro residues-rich tracts occupy residues 1068 to 1081 (APPPPPPAAAPAPK) and 1143 to 1155 (APKPTPPPPPPAA). An SH3 domain is found at 1080 to 1141 (PKKPTAKALY…PEAYLEEQVA (62 aa)). Low complexity-rich tracts occupy residues 1156–1173 (PRSTPTPVNGAAAAAKAK) and 1221–1235 (NSASNASLAGGLAEA).

Belongs to the TRAFAC class myosin-kinesin ATPase superfamily. Myosin family. In terms of processing, phosphorylation of the TEDS site (Ser-371) is required for the polarization of the actin cytoskeleton. Phosphorylation probably activates the myosin-I ATPase activity.

The protein localises to the cytoplasm. It is found in the cytoskeleton. It localises to the actin patch. Functionally, type-I myosin implicated in the organization of the actin cytoskeleton. Required for proper actin cytoskeleton polarization. At the cell cortex, assembles in patch-like structures together with proteins from the actin-polymerizing machinery and promotes actin assembly. Functions as actin nucleation-promoting factor (NPF) for the Arp2/3 complex. Plays an important role in polarized growth, spore germination, hyphal morphogenesis, and septal wall formation. This chain is Myosin-1 (myoA), found in Aspergillus clavatus (strain ATCC 1007 / CBS 513.65 / DSM 816 / NCTC 3887 / NRRL 1 / QM 1276 / 107).